Consider the following 779-residue polypeptide: Guanyl-specific ribonuclease pgl-1 (779 aa).

An involved in dimerization region spans residues 203–464 (KLLLEGVKEQ…KRIIDALEKS (262 aa)). Residue His-453 is the Proton acceptor of the active site. Disordered regions lie at residues 563–596 (HEPQTATLVPPSPNEESMAAESISTDGWDSPTKS), 611–661 (RDAL…GDAT), and 718–779 (GRGG…GGNF). The span at 584–595 (SISTDGWDSPTK) shows a compositional bias: polar residues. Residues 612 to 626 (DALKPDSVNSHRSEE) show a composition bias toward basic and acidic residues. The segment at 699–772 (GGGGGSYGGR…GGDRGGRGGY (74 aa)) is RNA-binding RGG-box.

In terms of assembly, homodimer. Interacts with pgl-2 and pgl-3; this association is not required for P-granule localization of either pgl-2 or pgl-3. Interacts with ife-1. Interacts with prmt-1; the interaction is direct. Interacts with nmad-1. Interacts with P granule components meg-1, meg-3 and meg-4. Requires Does not require metal ions for catalytic activity. as cofactor.

It localises to the cytoplasmic granule. The enzyme catalyses [RNA] containing guanosine + H2O = an [RNA fragment]-3'-guanosine-3'-phosphate + a 5'-hydroxy-ribonucleotide-3'-[RNA fragment].. Guanyl-specific endoribonuclease which cleaves the phosphodiester bond in single-stranded RNA between the 3'-guanylic residue and the 5'-OH residue of adjacent nucleotide, resulting in the formation of a corresponding 2',3'-cyclic phosphate intermediate. Essential role in male and female postembryonic germline development; maternally provided protein maintains a population of proliferating germ cells and zygotic expression is required for correct oogenesis. Together with the P-granule component pgl-3, is involved in the formation of P-granules. Together with pgl-3, probably recruits other granule components such as pos-1, mex-3 and glh-1 to P-granules. In addition, may act redundantly with pgl-3 to protect germ cells from excessive germline apoptosis during normal oogenesis and development of the two gonadal arms. This may in part be through regulating the localization of sir-2.1 which is involved in germ cell apoptosis. May protect somatic cells from excessive apoptosis during normal development. The chain is Guanyl-specific ribonuclease pgl-1 from Caenorhabditis remanei (Caenorhabditis vulgaris).